Reading from the N-terminus, the 491-residue chain is Glutamyl-tRNA(Gln) amidotransferase subunit A (491 aa).

Residues Lys77 and Ser152 each act as charge relay system in the active site. The active-site Acyl-ester intermediate is Ser176.

It belongs to the amidase family. GatA subfamily. In terms of assembly, heterotrimer of A, B and C subunits.

It catalyses the reaction L-glutamyl-tRNA(Gln) + L-glutamine + ATP + H2O = L-glutaminyl-tRNA(Gln) + L-glutamate + ADP + phosphate + H(+). In terms of biological role, allows the formation of correctly charged Gln-tRNA(Gln) through the transamidation of misacylated Glu-tRNA(Gln) in organisms which lack glutaminyl-tRNA synthetase. The reaction takes place in the presence of glutamine and ATP through an activated gamma-phospho-Glu-tRNA(Gln). The sequence is that of Glutamyl-tRNA(Gln) amidotransferase subunit A (gatA) from Chlamydia muridarum (strain MoPn / Nigg).